A 231-amino-acid polypeptide reads, in one-letter code: Tol-Pal system protein TolQ (231 aa).

A run of 3 helical transmembrane segments spans residues 20–40 (IVVQ…WIMI), 134–154 (FLAT…VWGI), and 176–196 (IAEA…AVIA).

It belongs to the ExbB/TolQ family. The Tol-Pal system is composed of five core proteins: the inner membrane proteins TolA, TolQ and TolR, the periplasmic protein TolB and the outer membrane protein Pal. They form a network linking the inner and outer membranes and the peptidoglycan layer.

Its subcellular location is the cell inner membrane. Its function is as follows. Part of the Tol-Pal system, which plays a role in outer membrane invagination during cell division and is important for maintaining outer membrane integrity. The sequence is that of Tol-Pal system protein TolQ from Pseudomonas aeruginosa (strain ATCC 15692 / DSM 22644 / CIP 104116 / JCM 14847 / LMG 12228 / 1C / PRS 101 / PAO1).